We begin with the raw amino-acid sequence, 273 residues long: MLEITLLGTGSPIPDPDRAGPSTLVRAGAQAFLVDCGRGVLQRAAAVGVGAAGLSAVLLTHLHGDVLITSWVTNFAADPAPLPIIGPPGTAEVVEATLKAFGHDIGYRIAHHADLTTPPPIEVHEYTAGPAWDRDGVTIRVAPTDHRPVTPTIGFRIESDGASVVLAGDTVPCDSLDQLAAGADALVHTVIRKDIVTQIPQQRVKDICDYHSSVQEAAATANRAGVGTLVMTHYVPAIGPGQEEQWRALAATEFSGRIEVGNDLHRVEVHPRR.

5 residues coordinate Zn(2+): histidine 61, histidine 63, histidine 146, aspartate 169, and histidine 233.

This sequence belongs to the RNase Z family. Homodimer. The cofactor is Zn(2+).

The catalysed reaction is Endonucleolytic cleavage of RNA, removing extra 3' nucleotides from tRNA precursor, generating 3' termini of tRNAs. A 3'-hydroxy group is left at the tRNA terminus and a 5'-phosphoryl group is left at the trailer molecule.. Zinc phosphodiesterase, which displays some tRNA 3'-processing endonuclease activity. Probably involved in tRNA maturation, by removing a 3'-trailer from precursor tRNA. This chain is Ribonuclease Z, found in Mycobacterium tuberculosis (strain ATCC 25177 / H37Ra).